The sequence spans 222 residues: Uracil-DNA glycosylase (222 aa).

Aspartate 66 acts as the Proton acceptor in catalysis.

This sequence belongs to the uracil-DNA glycosylase (UDG) superfamily. UNG family.

It is found in the cytoplasm. It catalyses the reaction Hydrolyzes single-stranded DNA or mismatched double-stranded DNA and polynucleotides, releasing free uracil.. In terms of biological role, excises uracil residues from the DNA which can arise as a result of misincorporation of dUMP residues by DNA polymerase or due to deamination of cytosine. This Porphyromonas gingivalis (strain ATCC 33277 / DSM 20709 / CIP 103683 / JCM 12257 / NCTC 11834 / 2561) protein is Uracil-DNA glycosylase.